The following is a 426-amino-acid chain: ATP-dependent Clp protease ATP-binding subunit ClpX (426 aa).

The ClpX-type ZB domain maps to 1 to 52 (MNEIKKRCSFCNKEESLDNPIINSGITPDVYICNYCLIVGSEILTGYLNKNP). 4 residues coordinate Zn(2+): C8, C11, C33, and C36. 129–136 (PTGSGKTL) contacts ATP.

The protein belongs to the ClpX chaperone family. In terms of assembly, component of the ClpX-ClpP complex. Forms a hexameric ring that, in the presence of ATP, binds to fourteen ClpP subunits assembled into a disk-like structure with a central cavity, resembling the structure of eukaryotic proteasomes.

In terms of biological role, ATP-dependent specificity component of the Clp protease. It directs the protease to specific substrates. Can perform chaperone functions in the absence of ClpP. This Helicobacter hepaticus (strain ATCC 51449 / 3B1) protein is ATP-dependent Clp protease ATP-binding subunit ClpX.